A 350-amino-acid polypeptide reads, in one-letter code: Phosphotriesterase-related protein (350 aa).

A divalent metal cation contacts are provided by His-22, His-24, Glu-169, His-201, His-230, and Asp-298.

Belongs to the metallo-dependent hydrolases superfamily. Phosphotriesterase family. The cofactor is a divalent metal cation.

The polypeptide is Phosphotriesterase-related protein (Drosophila ananassae (Fruit fly)).